Consider the following 476-residue polypeptide: ATP synthase subunit beta, chloroplastic (476 aa).

Gly-156 to Thr-163 serves as a coordination point for ATP.

Belongs to the ATPase alpha/beta chains family. F-type ATPases have 2 components, CF(1) - the catalytic core - and CF(0) - the membrane proton channel. CF(1) has five subunits: alpha(3), beta(3), gamma(1), delta(1), epsilon(1). CF(0) has four main subunits: a(1), b(1), b'(1) and c(9-12).

The protein localises to the plastid. Its subcellular location is the chloroplast thylakoid membrane. It carries out the reaction ATP + H2O + 4 H(+)(in) = ADP + phosphate + 5 H(+)(out). In terms of biological role, produces ATP from ADP in the presence of a proton gradient across the membrane. The catalytic sites are hosted primarily by the beta subunits. This chain is ATP synthase subunit beta, chloroplastic, found in Fucus vesiculosus (Bladder wrack).